The chain runs to 336 residues: Holliday junction branch migration complex subunit RuvB (336 aa).

The large ATPase domain (RuvB-L) stretch occupies residues 4–184 (ADRLISADAI…FGIVQRLEFY (181 aa)). ATP-binding positions include R24, G65, K68, T69, T70, 131 to 133 (EDY), R174, Y184, and R221. T69 contacts Mg(2+). Residues 185 to 255 (NVADLQYIVG…VATQALDMLA (71 aa)) form a small ATPAse domain (RuvB-S) region. A head domain (RuvB-H) region spans residues 258 to 336 (TEGFDYMDRK…HFGLTREDLG (79 aa)). Residues R294, R313, and R318 each coordinate DNA.

Belongs to the RuvB family. As to quaternary structure, homohexamer. Forms an RuvA(8)-RuvB(12)-Holliday junction (HJ) complex. HJ DNA is sandwiched between 2 RuvA tetramers; dsDNA enters through RuvA and exits via RuvB. An RuvB hexamer assembles on each DNA strand where it exits the tetramer. Each RuvB hexamer is contacted by two RuvA subunits (via domain III) on 2 adjacent RuvB subunits; this complex drives branch migration. In the full resolvosome a probable DNA-RuvA(4)-RuvB(12)-RuvC(2) complex forms which resolves the HJ.

The protein resides in the cytoplasm. The catalysed reaction is ATP + H2O = ADP + phosphate + H(+). Its function is as follows. The RuvA-RuvB-RuvC complex processes Holliday junction (HJ) DNA during genetic recombination and DNA repair, while the RuvA-RuvB complex plays an important role in the rescue of blocked DNA replication forks via replication fork reversal (RFR). RuvA specifically binds to HJ cruciform DNA, conferring on it an open structure. The RuvB hexamer acts as an ATP-dependent pump, pulling dsDNA into and through the RuvAB complex. RuvB forms 2 homohexamers on either side of HJ DNA bound by 1 or 2 RuvA tetramers; 4 subunits per hexamer contact DNA at a time. Coordinated motions by a converter formed by DNA-disengaged RuvB subunits stimulates ATP hydrolysis and nucleotide exchange. Immobilization of the converter enables RuvB to convert the ATP-contained energy into a lever motion, pulling 2 nucleotides of DNA out of the RuvA tetramer per ATP hydrolyzed, thus driving DNA branch migration. The RuvB motors rotate together with the DNA substrate, which together with the progressing nucleotide cycle form the mechanistic basis for DNA recombination by continuous HJ branch migration. Branch migration allows RuvC to scan DNA until it finds its consensus sequence, where it cleaves and resolves cruciform DNA. The sequence is that of Holliday junction branch migration complex subunit RuvB from Pectobacterium carotovorum subsp. carotovorum (strain PC1).